A 1296-amino-acid polypeptide reads, in one-letter code: MLDVNFFDELRIGLATADDIRQWSFGEVKKPETINYRTLKPEKDGLFCEKIFGPTRDWECYCGKYKRVRFKGIICERCGVEVTRAKVRRERMGHIELAAPVTHIWYFKGVPSRLGYLLDLAPKDLEKVIYFAAYMITKVDIDSRHRDLPTLEARIGVEKQQLEDKKNADVETRQRKLEEDLAQLEAEGAKGDARRKVRESAEREMRQIRDRSQRKIDDLDRVFDRFKNMKVQDLEPDELLFRELRDRFGQYFEGGMGAEALQHRLADFDLAAEAESLRETIRSGKGQKKARALKRLKVVSAFLNTRNSPMGMVLDCVPVIPPDLRPMVQLDGGRFATSDLNDLYRRVINRNNRLKRLLDLGAPEIIVNNEKRMLQEAVDALFDNGRRGRPVTGPGNRPLKSLSDMLKGKQGRFRQNLLGKRVDYSGRSVIVVGPQLKLHQCGLPKQMALELFKPFVMKRLVDLNHAQNIKSAKRMVERARPVVWDVLEEVITEHPVLLNRAPTLHRLGIQAFEPQLVEGKAIQIHPLVCTAFNADFDGDQMAVHLPLSAEAQAEARILMLSSNNILSPASGRPLAMPSLDMVTGVFHLSRVSEGAIGEGRFFSSVAEAQMAFDAREIHLQARIQVRLRESTPPAEWAPPADWLPGDPFTLETTFGRCLLNEALPEGYPFINAQLNKKAQAAIVNDLAERYPKIQVAATLDALKSAGFYWATRSGVTVAIEDVVAPPNKAQILDEYEQRAERVEKQFGRGFLSDEERRSELVQIWTEATNKIAEAMEANFPETNPVYTLVNSGAAGNMMQIRQLAGMRGLVSNPKGEIIPRPIKANFREGLTVVEYFISTHGARKGLADTALRTADSGYLTRRLVDVSQDVIVREEDCGTERGILTRIARKGPDGVLVRDRYAETSAYARSLASDAVDAQGEVVVPAGADAGDVVIGQIIEAGIESVRVRSALTCESRMGVCAHCYGRSLATGKLVDVGEAVGIVAAQSIGEPGTQLTMRTFHSGGVAGDDITQGLPRVVELFEARSPKGKAPISEVTGRVKIEETEKTFKVVIVPDDGSEEIAYPVSRRSRLRVREGERVEVGAQLIDGAVDPHEVLRILGPRQVQLHLVDQVQEVYRSQGVSIHDKHIEIIIRQMLKRVNVLESGETTLLPGELVERARFEGENRRVVEIGGQPASARPVLMGITKASLATESWLSAASFQETTRVLTDAAINARSDSLVGLKENVIIGKLIPAGTGISRYRNIRVEPTDEARAAMYSVSGYEDGASVEYGAFGAGSGQAVPLDEFDYRSSGDYR.

Zn(2+) contacts are provided by cysteine 60, cysteine 62, cysteine 75, and cysteine 78. Residues glycine 188–arginine 209 are disordered. Mg(2+) contacts are provided by aspartate 535, aspartate 537, and aspartate 539. Zn(2+) contacts are provided by cysteine 877, cysteine 954, cysteine 961, and cysteine 964.

The protein belongs to the RNA polymerase beta' chain family. The RNAP catalytic core consists of 2 alpha, 1 beta, 1 beta' and 1 omega subunit. When a sigma factor is associated with the core the holoenzyme is formed, which can initiate transcription. Requires Mg(2+) as cofactor. It depends on Zn(2+) as a cofactor.

It catalyses the reaction RNA(n) + a ribonucleoside 5'-triphosphate = RNA(n+1) + diphosphate. Functionally, DNA-dependent RNA polymerase catalyzes the transcription of DNA into RNA using the four ribonucleoside triphosphates as substrates. The protein is DNA-directed RNA polymerase subunit beta' of Parafrankia sp. (strain EAN1pec).